We begin with the raw amino-acid sequence, 37 residues long: Photosystem I reaction center subunit VIII (37 aa).

Residues 7-27 (LPSFFVPLVGLVFPAIAMASL) form a helical membrane-spanning segment.

Belongs to the PsaI family.

It localises to the plastid. The protein localises to the chloroplast thylakoid membrane. Functionally, may help in the organization of the PsaL subunit. This is Photosystem I reaction center subunit VIII from Eucalyptus globulus subsp. globulus (Tasmanian blue gum).